Consider the following 2539-residue polypeptide: MNHPFGKEEAASQKQLFGFFCECLRRGEWELAQACVPQLQEGQGDIPKRVEDILQALVVCPNLLRCGQDINPQRVAWVWLLVLEKWLAREKKLLPVVFRRKLEFLLLSEDLQGDIPENILEELYETLTQGAVGHVPDGNPRRESWTPRLSSEAVSVLWDLLRQSPQPAQALLELLLEEDDGTGLCHWPLQNALVDLIRKALRALQGPDSVPPGVVDAIYGALRTLRCPAEPLGVELHLLCEELLEACRTEGSPLREERLLSCLLHKASRGLLSLYGHTYAEKVTEKPPRATASGKVSPDHLDPERAMLALFSNPNPAEAWKVAYFYCLSNNKHFLEQILVTALTLLKEEDFPNLGCLLDREFRPLSCLLVLLGWTHCQSLESAKRLLQTLHRTQGPGCDELLRDACDGLWAHLEVLEWCIQQSSNPIPKRDLLYHLHGGDSHSVLYTLHHLTNLPALREEDVLKLLQKVPAKDPQQEPDAVDAPVPEHLSQCQNLTLYQGFCAMKYAIYALCVNSHQHSQCQDCKDSLSEDLASATEPANDSLSSPGAANLFSTYLARCQQYLCSIPDSLCLELLENIFSLLLITSADLHPEPHLPEDYAEDDDIEGKSPSGLRSPSESPQHIAHPERKSERGSLGVPKTLAYTMPSHVKAEPKDSYPGPHRHSFLDLKHFTSGISGFLADEFAIGAFLRLLQEQLDEISSRSPPEKPKQESQSCSGSRDGLQSRLHRLSKVVSEAQWRHKVVTSNHRSEEQPSRRYQPATRHPSLRRGRRTRRSQADGRDRGSNPSLESTSSELSTSTSEGSLSAMSGRNELHSRLHPHPQSSLIPMMFSPPESLLASCILRGNFAEAHQVLFTFNLKSSPSSGELMFMERYQEVIQELAQVEHKIENQNSDAGSSTIRRTGSGRSTLQAIGSAAAAGMVFYSISDVTDKLLNTSGDPIPMLQEDFWISTALVEPTAPLREVLEDLSPPAMAAFDLACSQCQLWKTCKQLLETAERRLNSSLERRGRRIDHVLLNADGIRGFPVVLQQISKSLNYLLMSASQTKSESVEEKGGGPPRCSITELLQMCWPSLSEDCVASHTTLSQQLDQVLQSLREALELPEPRTPPLSSLVEQAAQKAPEAEAHPVQIQTQLLQKNLGKQTPSGSRQMDYLGTFFSYCSTLAAVLLQSLSSEPDHVEVKVGNPFVLLQQSSSQLVSHLLFERQVPPERLAALLAQENLSLSVPQVIVSCCCEPLALCSSRQSQQTSSLLTRLGTLAQLHASHCLDDLPLSTPSSPRTTENPTLERKPYSSPRDSSLPALTSSALAFLKSRSKLLATVACLGASPRLKVSKPSLSWKELRGRREVPLAAEQVARECERLLEQFPLFEAFLLAAWEPLRGSLQQGQSLAVNLCGWASLSTVLLGLHSPIALDVLSEAFEESLVARDWSRALQLTEVYGRDVDDLSSIKDAVLSCAVACDKEGWQYLFPVKDASLRSRLALQFVDRWPLESCLEILAYCISDTAVQEGLKCELQRKLAELQVYQKILGLQSPPVWCDWQTLRSCCVEDPSTVMNMILEAQEYELCEEWGCLYPIPREHLISLHQKHLLHLLERRDHDKALQLLRRIPDPTMCLEVTEQSLDQHTSLATSHFLANYLTTHFYGQLTAVRHREIQALYVGSKILLTLPEQHRASYSHLSSNPLFMLEQLLMNMKVDWATVAVQTLQQLLVGQEIGFTMDEVDSLLSRYAEKALDFPYPQREKRSDSVIHLQEIVHQAADPETLPRSPSAEFSPAAPPGISSIHSPSLRERSFPPTQPSQEFVPPATPPARHQWVPDETESICMVCCREHFTMFNRRHHCRRCGRLVCSSCSTKKMVVEGCRENPARVCDQCYSYCNKDVPEEPSEKPEALDSSKNESPPYSFVVRVPKADEVEWILDLKEEENELVRSEFYYEQAPSASLCIAILNLHRDSIACGHQLIEHCCRLSKGLTNPEVDAGLLTDIMKQLLFSAKMMFVKAGQSQDLALCDSYISKVDVLNILVAAAYRHVPSLDQILQPAAVTRLRNQLLEAEYYQLGVEVSTKTGLDTTGAWHAWGMACLKAGNLTAAREKFSRCLKPPFDLNQLNHGSRLVQDVVEYLESTVRPFVSLQDDDYFATLRELEATLRTQSLSLAVIPEGKIMNNTYYQECLFYLHNYSTNLAIISFYVRHSCLREALLHLLNKESPPEVFIEGIFQPSYKSGKLHTLENLLESIDPTLESWGKYLIAACQHLQKKNYYHILYELQQFMKDQVRAAMTCIRFFSHKAKSYTELGEKLSWLLKAKDHLKIYLQETSRSSGRKKTTFFRKKMTAADVSRHMNTLQLQMEVTRFLHRCESAGTSQITTLPLPTLFGNNHMKMDVACKVMLGGKNVEDGFGIAFRVLQDFQLDAAMTYCRAARQLVEKEKYSEIQQLLKCVSESGMAAKSDGDTILLNCLEAFKRIPPQELEGLIQAIHNDDNKVRAYLICCKLRSAYLIAVKQEHSRATALVQQVQQAAKSSGDAVVQDICAQWLLTSHPRGAHGPGSRK.

Phosphoserine occurs at positions 297, 615, 619, and 703. Disordered stretches follow at residues H594–V637, I699–S724, and W738–A806. The segment covering P764–R774 has biased composition (basic residues). Residues S787–S805 show a composition bias toward low complexity. Residue S800 is modified to Phosphoserine. The stretch at M868–G895 forms a coiled coil. Residues D1267–S1296 are disordered. Residues S1271–P1282 show a composition bias toward polar residues. Residues S1742, S1764, S1780, and S1782 each carry the phosphoserine modification. Residues A1754–Q1808 form a disordered region. Over residues P1760 to P1769 the composition is skewed to low complexity. The segment at D1812 to N1872 adopts an FYVE-type zinc-finger fold. Zn(2+) is bound by residues C1818, C1821, C1835, C1838, C1843, C1846, C1864, and C1867.

In terms of assembly, interacts with AP5Z1, AP5B1, AP5S1 and SPG11. Interacts with TTC19 and KIF13A. As to expression, strongest expression in the adrenal gland, bone marrow, adult brain, fetal brain, lung, placenta, prostate, skeletal muscle, testis, thymus, and retina. Intermediate levels are detected in other structures, including the spinal cord.

It localises to the cytoplasm. It is found in the cytoskeleton. The protein localises to the microtubule organizing center. Its subcellular location is the centrosome. The protein resides in the midbody. In terms of biological role, phosphatidylinositol 3-phosphate-binding protein required for the abscission step in cytokinesis: recruited to the midbody during cytokinesis and acts as a regulator of abscission. May also be required for efficient homologous recombination DNA double-strand break repair. The chain is Zinc finger FYVE domain-containing protein 26 (ZFYVE26) from Homo sapiens (Human).